The sequence spans 578 residues: Adhesion G protein-coupled receptor A1 (578 aa).

Residues 1-22 (MTQWDLKTVLSLPQYPGEFLHP) are Extracellular-facing. Residues 23-43 (VVYACTAVMLLCLLASVITYI) traverse the membrane as a helical segment. Residues 44–56 (LHQSAIRISRKGR) are Cytoplasmic-facing. The chain crosses the membrane as a helical span at residues 57–77 (HALLNFCFHAALTFTVFAGGI). The Extracellular segment spans residues 78-87 (NRTQHPILCQ). The helical transmembrane segment at 88 to 108 (AVGIALHYSTLSTMLWIGVTA) threads the bilayer. The Cytoplasmic segment spans residues 109–137 (RNIYKQVTKKALPCPGADQPPYPKQPLLR). The chain crosses the membrane as a helical span at residues 138-158 (FYLISGGVPFIICGVTAATNI). Topologically, residues 159-178 (RNYGTEDEDVAYCWMAWEPS) are extracellular. The chain crosses the membrane as a helical span at residues 179–199 (LGAFYGPAAFIALVTCVYFLC). Residues 200–262 (TYVQLRRHPE…NEHSFKAQLR (63 aa)) lie on the Cytoplasmic side of the membrane. The disordered stretch occupies residues 216–236 (ERTEEQQRLAVPESGHRHGVR). A helical transmembrane segment spans residues 263–283 (AAAFTLFLFTATWTFGALAVS). Over 284–289 (QGHFLD) the chain is Extracellular. The helical transmembrane segment at 290–310 (MIFSCLYGAFCVTLGLFVLIH) threads the bilayer. Disordered stretches follow at residues 463-486 (PSSL…EGPM) and 537-578 (SLPF…ETTV). Low complexity predominate over residues 469–481 (SPHSSRSESPTSS). Over residues 537-548 (SLPFGGPSQNGL) the composition is skewed to polar residues.

The protein belongs to the G-protein coupled receptor 2 family. Adhesion G-protein coupled receptor (ADGR) subfamily. Predominantly expressed in CNS.

It is found in the membrane. The chain is Adhesion G protein-coupled receptor A1 from Mus musculus (Mouse).